The following is a 175-amino-acid chain: Ribosome maturation factor RimM (175 aa).

The 81-residue stretch at 95–175 (EEGDYYWHDL…TITVDWDAGF (81 aa)) folds into the PRC barrel domain.

This sequence belongs to the RimM family. As to quaternary structure, binds ribosomal protein uS19.

It localises to the cytoplasm. In terms of biological role, an accessory protein needed during the final step in the assembly of 30S ribosomal subunit, possibly for assembly of the head region. Essential for efficient processing of 16S rRNA. May be needed both before and after RbfA during the maturation of 16S rRNA. It has affinity for free ribosomal 30S subunits but not for 70S ribosomes. The polypeptide is Ribosome maturation factor RimM (Glaesserella parasuis serovar 5 (strain SH0165) (Haemophilus parasuis)).